A 124-amino-acid polypeptide reads, in one-letter code: Tax1-binding protein 3 (124 aa).

The residue at position 2 (serine 2) is an N-acetylserine. Residues 15–112 form the PDZ domain; sequence RVEIHKLRQG…EVVRLLVTRQ (98 aa). A Phosphoserine modification is found at serine 61.

As to quaternary structure, interacts (via its PDZ domain) with GLS2. Interacts (via its PDZ domain) with RTKN (via the C-terminal region); this interaction facilitates Rho-mediated activation of the FOS serum response element (SRE). Interacts (via PDZ domain) with ARHGEF16. Interacts (via PDZ domain) with KCNJ4 (via C-terminus). Competes with LIN7A for KCNJ4 binding. Interacts (via its PDZ domain) with CTNNB1; this interaction inhibits the transcriptional activity of CTNNB1. Interacts with ADGRB2.

It localises to the cytoplasm. It is found in the nucleus. Its subcellular location is the cell membrane. In terms of biological role, may regulate a number of protein-protein interactions by competing for PDZ domain binding sites. Binds CTNNB1 and may thereby act as an inhibitor of the Wnt signaling pathway. Competes with LIN7A for KCNJ4 binding, and thereby promotes KCNJ4 internalization. May play a role in the Rho signaling pathway. The sequence is that of Tax1-binding protein 3 from Mus musculus (Mouse).